A 235-amino-acid polypeptide reads, in one-letter code: Glycerol-3-phosphate acyltransferase (235 aa).

Transmembrane regions (helical) follow at residues 4 to 24 (LLAILTVSYIIGSIPTSIMAG), 56 to 76 (TVTLIDIVKGVVAAVSVVAFF), 94 to 114 (LLAGMSAVIGHVFTVFAGFKG), 126 to 146 (IGIAPVSMLMVIGIFLLTVWF), 152 to 172 (VASIFAAVAFPLIIAIRKYVF), and 194 to 214 (SLDYHLIIFGLLVAFAILFTH).

This sequence belongs to the PlsY family. In terms of assembly, probably interacts with PlsX.

It is found in the cell inner membrane. The enzyme catalyses an acyl phosphate + sn-glycerol 3-phosphate = a 1-acyl-sn-glycero-3-phosphate + phosphate. It functions in the pathway lipid metabolism; phospholipid metabolism. Its function is as follows. Catalyzes the transfer of an acyl group from acyl-phosphate (acyl-PO(4)) to glycerol-3-phosphate (G3P) to form lysophosphatidic acid (LPA). This enzyme utilizes acyl-phosphate as fatty acyl donor, but not acyl-CoA or acyl-ACP. This is Glycerol-3-phosphate acyltransferase from Chlorobium phaeovibrioides (strain DSM 265 / 1930) (Prosthecochloris vibrioformis (strain DSM 265)).